The chain runs to 419 residues: MNIIDELEWRGAINQQTDEEGLRKLVEEKKISLYCGVDPTGDSMHIGHLIPFMMMKRFQLAGHHPVILIGGATGTIGDPSGRQSERQLQTLEVVQHNVDALTAQMKKLFDFGGNSEVKMVNNYDWTHEINIIEFLRDYGKNFSINSMLAKDIVASRLDTGISFTEFTYQILQAMDFHHLYTKEDVQLQIGGSDQWGNITSGLDLIRKLEGHEAKVFGLTIPLLLKSDGTKFGKSAGGAVWLDPEKTTPFEFYQFWVNTDDRDVVKYLKYFTFLTKERIDELAVKVETEPHKREAQKVLAEEMTKFVHGEEALLQAVKITEALFSGDIKSLTADEIEQGFKEMPTFQSSKETKNIVEWLVDLGIEPSRRQAREDINNGAISMNGEKVTDVGTDVTVENSFDGRFIIIRKGKKNYSLVKLG.

Residue Tyr-34 coordinates L-tyrosine. The 'HIGH' region signature appears at 39 to 48 (PTGDSMHIGH). 2 residues coordinate L-tyrosine: Tyr-168 and Gln-172. Residues 230–234 (KFGKS) carry the 'KMSKS' region motif. Lys-233 serves as a coordination point for ATP. The S4 RNA-binding domain occupies 352–418 (KNIVEWLVDL…GKKNYSLVKL (67 aa)).

This sequence belongs to the class-I aminoacyl-tRNA synthetase family. TyrS type 1 subfamily. Homodimer.

The protein localises to the cytoplasm. The catalysed reaction is tRNA(Tyr) + L-tyrosine + ATP = L-tyrosyl-tRNA(Tyr) + AMP + diphosphate + H(+). Functionally, catalyzes the attachment of tyrosine to tRNA(Tyr) in a two-step reaction: tyrosine is first activated by ATP to form Tyr-AMP and then transferred to the acceptor end of tRNA(Tyr). This chain is Tyrosine--tRNA ligase 2, found in Bacillus cereus (strain ATCC 10987 / NRS 248).